Consider the following 503-residue polypeptide: Maturase K (503 aa).

The protein belongs to the intron maturase 2 family. MatK subfamily.

The protein localises to the plastid. It is found in the chloroplast. Usually encoded in the trnK tRNA gene intron. Probably assists in splicing its own and other chloroplast group II introns. This chain is Maturase K, found in Silene latifolia (White campion).